A 146-amino-acid chain; its full sequence is Large ribosomal subunit protein uL15 (146 aa).

The interval 1-54 (MKLHELQPAAGSRKAPKRVGRGTGSGLGRNAGKGEKGQNARSGGGVRPGFEGGQ) is disordered. 2 stretches are compositionally biased toward gly residues: residues 21 to 31 (RGTGSGLGRNA) and 42 to 52 (SGGGVRPGFEG).

This sequence belongs to the universal ribosomal protein uL15 family. In terms of assembly, part of the 50S ribosomal subunit.

Its function is as follows. Binds to the 23S rRNA. The protein is Large ribosomal subunit protein uL15 of Clostridium botulinum (strain Alaska E43 / Type E3).